Consider the following 74-residue polypeptide: Kappa-scoloptoxin(07)-Ssm2e (74 aa).

The first 19 residues, 1–19 (MLVFYALLFVSVFSNTVMG), serve as a signal peptide directing secretion. Positions 20–41 (ATIDMPIPKPILREAIEEIDVN) are excised as a propeptide.

It belongs to the scoloptoxin-07 family. In terms of processing, contains 3 disulfide bonds. In terms of tissue distribution, expressed by the venom gland.

Its subcellular location is the secreted. Its function is as follows. Inhibits voltage-gated potassium channels. The sequence is that of Kappa-scoloptoxin(07)-Ssm2e from Scolopendra mutilans (Chinese red-headed centipede).